A 262-amino-acid polypeptide reads, in one-letter code: Protein BREAKING OF ASYMMETRY IN THE STOMATAL LINEAGE (262 aa).

Disordered regions lie at residues 32-107 (DEDG…QPPV) and 129-222 (KEGK…GRGS). Low complexity predominate over residues 37-47 (NNNGNTTNNNN). 2 short sequence motifs (nuclear localization signal) span residues 50 to 57 (FKRIKRKI) and 61 to 68 (KKKRSERK). Basic residues predominate over residues 51–66 (KRIKRKIKSTKKKRSE). Phosphoserine; by ASK7 is present on residues Ser-72, Ser-85, Ser-86, and Ser-87. Residues 84–95 (RSSSVSPTTSGS) are compositionally biased toward low complexity. Residue Ser-89 is modified to Phosphoserine; by ASK7 and MPK6. Thr-91 is subject to Phosphothreonine; by ASK7. Over residues 129–146 (KEGKQEKKETESSSEKSP) the composition is skewed to basic and acidic residues. A phosphoserine; by MPK6 mark is found at Ser-145 and Ser-168. Polar residues predominate over residues 179–189 (NDNTSCQGTKD). The span at 190–200 (VSSDVTERTKE) shows a compositional bias: basic and acidic residues. Residues 222 to 262 (SFAFPILGVEWMGSPAKMPESDDLSPKKQKPVALGFQCCRF) are required for polarization at the cell cortex. The FxFP, required for cortical polarity formation signature appears at 223–226 (FAFP). A phosphoserine; by MPK6 mark is found at Ser-235 and Ser-246.

Component of a complex made of POLAR, BASL, ASK7/BIN2 and ASK3/SK12. Interacts with POLAR, ASK7/BIN2 and ASK3/SK12. Binds to YDA when phosphorylated. Interacts with MPK6, MPK3 and MKK5. Post-translationally, cortical localization of BASL requires phosphorylation mediated by MPK3 and MPK6. Phosphorylation promotes YDA binding. Phosphorylation status modulates subcellular mobility. As to expression, mostly expressed in stomatal lineage cells including asymmetrically dividing meristemoid mother cells (MMCs) and meristemoids, and, at lower levels, in their sisters. Also present in vasculature. Expressed at low levels in the epidermal pavement cells.

The protein resides in the cytoplasm. It localises to the nucleus. The protein localises to the cell cortex. Its subcellular location is the cell membrane. Functionally, regulates asymmetric cell division (ACD), especially in stomatal-lineage cells, probably by modulating accumulation and subcellular polarization of POLAR and SPCH. Mediates an attenuation of MAPK signaling upon polarization of POLAR and ASK7/BIN2 in stomatal lineage ground cells (SLGCs) undergoing ACD, and relieves BIN2 inhibition of SPCH in the nucleus. When phosphorylated, functions as a scaffold and recruits the MAPKKK YODA, MPK3 and MPK6 to spatially reorganize the MAPK signaling pathway at the cortex of cells undergoing ACD. Cortical polarization leads to elevated nuclear MPK6 signaling and lowered SPCH abundance in one of the two daughter cells, thus differentiating the two daughter cells after ACD. This Arabidopsis thaliana (Mouse-ear cress) protein is Protein BREAKING OF ASYMMETRY IN THE STOMATAL LINEAGE.